The sequence spans 152 residues: Endoribonuclease YbeY (152 aa).

Zn(2+) is bound by residues H112, H116, and H122.

This sequence belongs to the endoribonuclease YbeY family. The cofactor is Zn(2+).

It localises to the cytoplasm. Single strand-specific metallo-endoribonuclease involved in late-stage 70S ribosome quality control and in maturation of the 3' terminus of the 16S rRNA. The polypeptide is Endoribonuclease YbeY (Pseudoalteromonas translucida (strain TAC 125)).